Here is a 1306-residue protein sequence, read N- to C-terminus: Receptor-type tyrosine-protein phosphatase C (1306 aa).

The signal sequence occupies residues 1–25 (MTMYLWLKLLAFGFAFLDTEVFVTG). Topologically, residues 26–577 (QSPTPSPTGL…LHHSTSYNSK (552 aa)) are extracellular. The tract at residues 28–163 (PTPSPTGLTT…TASTFPTDPV (136 aa)) is disordered. Composition is skewed to polar residues over residues 52-61 (THTTAFSPAS) and 70-131 (SETT…SGSA). Asn-80, Asn-92, Asn-97, Asn-186, Asn-192, Asn-199, Asn-234, Asn-262, Asn-272, and Asn-278 each carry an N-linked (GlcNAc...) asparagine glycan. The N-linked (GlcNAc...) asparagine; atypical glycan is linked to Asn-286. Asn-337, Asn-380, Asn-421, Asn-470, Asn-490, and Asn-531 each carry an N-linked (GlcNAc...) asparagine glycan. Fibronectin type-III domains lie at 391–483 (SPGE…TKSA) and 484–576 (PPSQ…SYNS). Residues 578–598 (ALIAFLAFLIIVTSIALLVVL) form a helical membrane-spanning segment. Residues 599–1306 (YKIYDLHKKR…PASPALNQGS (708 aa)) are Cytoplasmic-facing. 2 Tyrosine-protein phosphatase domains span residues 653 to 912 (FLAE…LVEY) and 944 to 1228 (LEAE…IAST). A Phosphotyrosine modification is found at Tyr-683. Substrate contacts are provided by residues Asp-821, 853–859 (CSAGVGR), and Gln-897. The active-site Phosphocysteine intermediate is Cys-853. Phosphoserine occurs at positions 975, 994, 997, 1001, 1004, 1005, and 1009. Positions 993-1014 (MSKESEHDSDESSDDDSDSEEP) are disordered. Positions 999 to 1012 (HDSDESSDDDSDSE) are enriched in acidic residues. Catalysis depends on Cys-1169, which acts as the Phosphocysteine intermediate. The segment at 1261–1306 (CVNPLGAPEKLPEAKEQAEGSEPTSGTEGPEHSVNGPASPALNQGS) is disordered. Ser-1299 carries the post-translational modification Phosphoserine.

This sequence belongs to the protein-tyrosine phosphatase family. Receptor class 1/6 subfamily. As to quaternary structure, binds GANAB and PRKCSH. Interacts with SKAP1. Interacts with DPP4; the interaction is enhanced in an interleukin-12-dependent manner in activated lymphocytes. Interacts with CD53; this interaction stabilizes PTPRC on the membrane and is required for optimal phosphatase activity. In terms of assembly, interacts with CLEC10A. Does not interact with CLEC10A. As to quaternary structure, (Microbial infection) Interacts with human cytomegalovirus protein UL11; the interaction is required for binding of UL11 to T-cells. Heavily N- and O-glycosylated. As to expression, isoform 1: Detected in thymocytes. Isoform 2: Detected in thymocytes. Isoform 3: Detected in thymocytes. Isoform 4: Not detected in thymocytes. Isoform 5: Detected in thymocytes. Isoform 6: Not detected in thymocytes. Isoform 7: Detected in thymocytes. Isoform 8: Not detected in thymocytes.

The protein localises to the cell membrane. It localises to the membrane raft. It is found in the synapse. It carries out the reaction O-phospho-L-tyrosyl-[protein] + H2O = L-tyrosyl-[protein] + phosphate. Functionally, protein tyrosine-protein phosphatase required for T-cell activation through the antigen receptor. Acts as a positive regulator of T-cell coactivation upon binding to DPP4. The first PTPase domain has enzymatic activity, while the second one seems to affect the substrate specificity of the first one. Upon T-cell activation, recruits and dephosphorylates SKAP1 and FYN. Dephosphorylates LYN, and thereby modulates LYN activity. Interacts with CLEC10A at antigen presenting cell-T cell contact; CLEC10A on immature dendritic cells recognizes Tn antigen-carrying PTPRC/CD45 receptor on effector T cells and modulates T cell activation threshold to limit autoreactivity. (Microbial infection) Acts as a receptor for human cytomegalovirus protein UL11 and mediates binding of UL11 to T-cells, leading to reduced induction of tyrosine phosphorylation of multiple signaling proteins upon T-cell receptor stimulation and impaired T-cell proliferation. In Homo sapiens (Human), this protein is Receptor-type tyrosine-protein phosphatase C.